The sequence spans 587 residues: Phosphomethylpyrimidine synthase (587 aa).

Substrate-binding positions include Asn218, Met247, Tyr276, His312, Ser332–Gly334, Asp373–Arg376, and Glu412. His416 contacts Zn(2+). Substrate is bound at residue Tyr439. A Zn(2+)-binding site is contributed by His480. Residues Cys560, Cys563, and Cys568 each contribute to the [4Fe-4S] cluster site.

Belongs to the ThiC family. [4Fe-4S] cluster is required as a cofactor.

The catalysed reaction is 5-amino-1-(5-phospho-beta-D-ribosyl)imidazole + S-adenosyl-L-methionine = 4-amino-2-methyl-5-(phosphooxymethyl)pyrimidine + CO + 5'-deoxyadenosine + formate + L-methionine + 3 H(+). It participates in cofactor biosynthesis; thiamine diphosphate biosynthesis. Catalyzes the synthesis of the hydroxymethylpyrimidine phosphate (HMP-P) moiety of thiamine from aminoimidazole ribotide (AIR) in a radical S-adenosyl-L-methionine (SAM)-dependent reaction. In Porphyromonas gingivalis (strain ATCC BAA-308 / W83), this protein is Phosphomethylpyrimidine synthase.